The primary structure comprises 219 residues: Urease subunit gamma/beta (219 aa).

Positions 1–101 (MFLTPREQEK…LVTVRNPIKS (101 aa)) are urease gamma. The interval 102 to 219 (SKKTLNTYII…IKRAKERGFA (118 aa)) is urease beta.

The protein in the N-terminal section; belongs to the urease gamma subunit family. In the C-terminal section; belongs to the urease beta subunit family. In terms of assembly, heterohexamer of 3 UreC (alpha) and 3 UreAB (gamma/beta) subunits.

Its subcellular location is the cytoplasm. It carries out the reaction urea + 2 H2O + H(+) = hydrogencarbonate + 2 NH4(+). Its pathway is nitrogen metabolism; urea degradation; CO(2) and NH(3) from urea (urease route): step 1/1. This is Urease subunit gamma/beta from Sulfurisphaera tokodaii (strain DSM 16993 / JCM 10545 / NBRC 100140 / 7) (Sulfolobus tokodaii).